The primary structure comprises 77 residues: uncharacterized protein (77 aa).

The helical transmembrane segment at 36–52 (FYQLILKVLSALLLLSV) threads the bilayer.

Its subcellular location is the membrane. This is an uncharacterized protein from Saccharomyces cerevisiae (strain ATCC 204508 / S288c) (Baker's yeast).